Reading from the N-terminus, the 201-residue chain is Large ribosomal subunit protein uL4 (201 aa).

The segment at 44–71 (RAQKTRAEVSGSGKKPWRQKGTGRARSG) is disordered.

The protein belongs to the universal ribosomal protein uL4 family. As to quaternary structure, part of the 50S ribosomal subunit.

Functionally, one of the primary rRNA binding proteins, this protein initially binds near the 5'-end of the 23S rRNA. It is important during the early stages of 50S assembly. It makes multiple contacts with different domains of the 23S rRNA in the assembled 50S subunit and ribosome. Forms part of the polypeptide exit tunnel. In Actinobacillus succinogenes (strain ATCC 55618 / DSM 22257 / CCUG 43843 / 130Z), this protein is Large ribosomal subunit protein uL4.